The primary structure comprises 521 residues: Calcium-dependent protein kinase 33 (521 aa).

A lipid anchor (N-myristoyl glycine) is attached at Gly-2. Residues 15–56 are disordered; sequence PQQNGERSVEIENRRRSTHQDPSKISTGTNQPPPWRNPAKHS. Basic and acidic residues predominate over residues 21-36; that stretch reads RSVEIENRRRSTHQDP. One can recognise a Protein kinase domain in the interval 73–331; the sequence is YTLSKELGRG…AAEVLKHPWL (259 aa). Residues 79–87 and Lys-102 each bind ATP; that span reads LGRGQFGVT. The active-site Proton acceptor is the Asp-197. Ser-237 carries the post-translational modification Phosphoserine. The segment at 337–367 is autoinhibitory domain; the sequence is ASDKPIDSAVLSRMKQFRAMNKLKKLALKVI. EF-hand domains lie at 374-409, 410-445, 446-481, and 482-516; these read EEIQ…LGSR, LTEA…RHRL, ESNE…YGMG, and DDAT…GNPQ. Residues Asp-387, Asp-389, Ser-391, Thr-393, Glu-398, Asp-423, Asp-425, Asn-427, Ser-429, Glu-434, Asp-459, Asp-461, Ser-463, Tyr-465, Glu-470, Asp-494, Asp-496, Asp-498, Arg-500, and Glu-505 each contribute to the Ca(2+) site.

Belongs to the protein kinase superfamily. Ser/Thr protein kinase family. CDPK subfamily. Interacts with THI1. Interacts with FD and FDP. Autophosphorylated. In terms of tissue distribution, expressed in primary roots, leaves, inflorescences, siliques and guard cells. Expressed in the shoot apical meristem.

It localises to the cell membrane. The protein localises to the nucleus. It is found in the cytoplasm. The catalysed reaction is L-seryl-[protein] + ATP = O-phospho-L-seryl-[protein] + ADP + H(+). The enzyme catalyses L-threonyl-[protein] + ATP = O-phospho-L-threonyl-[protein] + ADP + H(+). Its activity is regulated as follows. Activated by calcium. Autophosphorylation may play an important role in the regulation of the kinase activity. Repressed by THI1 through a negative regulation of the autophosphorylation activity in the presence of Ca(2+). In terms of biological role, ca(2+)-dependent protein kinase. Negative regulator of stomatal closure and slow anion currents. Unable to phosphorylate THI1 in vitro, but the kinase activity is essential for the stomatal closure regulation. Phosphorylates FD. May play a role in signal transduction pathways that involve calcium as a second messenger. The chain is Calcium-dependent protein kinase 33 from Arabidopsis thaliana (Mouse-ear cress).